The sequence spans 280 residues: Putative transcription factor kapC (280 aa).

Residues 1–102 (MQPALAPHPS…GKRPLSTSKR (102 aa)) are disordered. The segment covering 39 to 49 (PQPPAPQPPHM) has biased composition (pro residues). A compositionally biased stretch (polar residues) spans 79–89 (TQPDVTGQETP). A bZIP domain is found at 96–159 (PLSTSKRAAQ…EYIINLQSRL (64 aa)). A basic motif region spans residues 97–120 (LSTSKRAAQNRAAQRAFRQRKEAH). Positions 124–155 (LEGKVKAYESMGEAIKALQAENYQLREYIINL) are leucine-zipper. Residues 169–280 (LPGNIDLSQP…EQTHGLPLIS (112 aa)) are disordered. Positions 197-206 (APPPTAPQQP) are enriched in pro residues.

Belongs to the bZIP family.

The protein localises to the nucleus. Its function is as follows. Putative transcription factor. This is Putative transcription factor kapC (kapC) from Aspergillus fumigatus (strain ATCC MYA-4609 / CBS 101355 / FGSC A1100 / Af293) (Neosartorya fumigata).